Here is a 238-residue protein sequence, read N- to C-terminus: LexA repressor (238 aa).

The H-T-H motif DNA-binding region spans 26–46 (FDEMKDALDLASKSGIHRLIT). Active-site for autocatalytic cleavage activity residues include S158 and K196.

The protein belongs to the peptidase S24 family. As to quaternary structure, homodimer.

The enzyme catalyses Hydrolysis of Ala-|-Gly bond in repressor LexA.. Represses a number of genes involved in the response to DNA damage (SOS response), including recA and lexA. In the presence of single-stranded DNA, RecA interacts with LexA causing an autocatalytic cleavage which disrupts the DNA-binding part of LexA, leading to derepression of the SOS regulon and eventually DNA repair. In Sinorhizobium medicae (strain WSM419) (Ensifer medicae), this protein is LexA repressor.